Consider the following 145-residue polypeptide: D-aminoacyl-tRNA deacylase (145 aa).

Positions 137–138 (GP) match the Gly-cisPro motif, important for rejection of L-amino acids motif.

Belongs to the DTD family. As to quaternary structure, homodimer.

It localises to the cytoplasm. It carries out the reaction glycyl-tRNA(Ala) + H2O = tRNA(Ala) + glycine + H(+). The enzyme catalyses a D-aminoacyl-tRNA + H2O = a tRNA + a D-alpha-amino acid + H(+). Its function is as follows. An aminoacyl-tRNA editing enzyme that deacylates mischarged D-aminoacyl-tRNAs. Also deacylates mischarged glycyl-tRNA(Ala), protecting cells against glycine mischarging by AlaRS. Acts via tRNA-based rather than protein-based catalysis; rejects L-amino acids rather than detecting D-amino acids in the active site. By recycling D-aminoacyl-tRNA to D-amino acids and free tRNA molecules, this enzyme counteracts the toxicity associated with the formation of D-aminoacyl-tRNA entities in vivo and helps enforce protein L-homochirality. In Salmonella typhi, this protein is D-aminoacyl-tRNA deacylase.